The sequence spans 730 residues: Guanyl-specific ribonuclease pgl-1 (730 aa).

An involved in dimerization region spans residues 205–447 (KQLMLDGPKS…VTRIVESLEK (243 aa)). The Proton acceptor role is filled by histidine 437. Polar residues-rich tracts occupy residues 452-472 (DTPS…QDSA) and 568-595 (DANQ…SPTK). 3 disordered regions span residues 452-475 (DTPS…AYTK), 567-639 (SDAN…TPMP), and 686-730 (GGRG…RGGF). The interval 674–730 (GGGRGGYGGGDRGGRGGYGGDRGGRGGYGGGDRGGRGGYGGDRGRGGYGGRGGRGGF) is RNA-binding RGG-box.

In terms of assembly, homodimer. Interacts with pgl-2 and pgl-3; this association is not required for P-granule localization of either pgl-2 or pgl-3. Interacts with ife-1. Interacts with prmt-1; the interaction is direct. Interacts with nmad-1. Interacts with P granule components meg-1, meg-3 and meg-4. It depends on Does not require metal ions for catalytic activity. as a cofactor. In terms of processing, methylated at arginine residues in the RNA-binding RGG-box by prmt-1. Methylation promotes P-granule degradation by autophagy. Expressed in the germline. Expressed in most somatic cells.

It localises to the cytoplasmic granule. It carries out the reaction [RNA] containing guanosine + H2O = an [RNA fragment]-3'-guanosine-3'-phosphate + a 5'-hydroxy-ribonucleotide-3'-[RNA fragment].. Its activity is regulated as follows. Not inhibited by RNase inhibitor RNasin. Functionally, guanyl-specific endoribonuclease which cleaves the phosphodiester bond in single-stranded RNA between the 3'-guanylic residue and the 5'-OH residue of adjacent nucleotide, resulting in the formation of a corresponding 2',3'-cyclic phosphate intermediate. Together with the P-granule component pgl-3, is involved in the formation of P-granules. Together with pgl-3, probably recruits other granule components such as pos-1, mex-3 and glh-1 to P-granules. In addition, may act redundantly with pgl-3 to protect germ cells from excessive germline apoptosis during normal oogenesis and development of the two gonadal arms. This may in part be through regulating the localization of sir-2.1 which is involved in germ cell apoptosis. May protect somatic cells from excessive apoptosis during normal development. Essential role in male and female postembryonic germline development; maternally provided protein maintains a population of proliferating germ cells and zygotic expression is required for correct oogenesis. This chain is Guanyl-specific ribonuclease pgl-1, found in Caenorhabditis elegans.